A 604-amino-acid chain; its full sequence is UvrABC system protein C (604 aa).

One can recognise a GIY-YIG domain in the interval 17–95 (SQPGVYRMLN…IKSLAPRYNI (79 aa)). The UVR domain maps to 204–239 (DEVLKTIEQKMFEASDRQAYEQAVLFRDQMQALRMI).

This sequence belongs to the UvrC family. In terms of assembly, interacts with UvrB in an incision complex.

The protein localises to the cytoplasm. Its function is as follows. The UvrABC repair system catalyzes the recognition and processing of DNA lesions. UvrC both incises the 5' and 3' sides of the lesion. The N-terminal half is responsible for the 3' incision and the C-terminal half is responsible for the 5' incision. The polypeptide is UvrABC system protein C (Nitrosomonas eutropha (strain DSM 101675 / C91 / Nm57)).